The following is a 1104-amino-acid chain: A disintegrin and metalloproteinase with thrombospondin motifs 10 (1104 aa).

The first 25 residues, 1-25, serve as a signal peptide directing secretion; the sequence is MASACQILRWALALGLGLTFKVTHA. A propeptide spanning residues 26–233 is cleaved from the precursor; that stretch reads FRSQDELLSS…SERGQLGLKR (208 aa). 2 N-linked (GlcNAc...) asparagine glycosylation sites follow: N90 and N222. A Peptidase M12B domain is found at 239–457; that stretch reads RYVETLVVAD…GLGLCLNNRP (219 aa). 11 cysteine pairs are disulfide-bonded: C315/C376, C351/C358, C370/C452, C409/C436, C479/C501, C490/C508, C496/C531, C521/C536, C559/C596, C563/C601, and C574/C586. H392 provides a ligand contact to Zn(2+). E393 is an active-site residue. Residues H396 and H402 each coordinate Zn(2+). The 87-residue stretch at 460 to 546 folds into the Disintegrin domain; that stretch reads QDFVYPTVAP…VPFGSRPEGV (87 aa). Positions 547–602 constitute a TSP type-1 1 domain; sequence DGAWGPWTPWGDCSRSCGGGVSSSSRHCDSPRPTIGGKYCLGERRRHRSCNTNDCP. Residues 706-818 are spacer; it reads ETIEGVFSPA…PALHYRFNAP (113 aa). N-linked (GlcNAc...) asparagine glycosylation is found at N740 and N795. 4 TSP type-1 domains span residues 825–885, 888–943, 944–1003, and 1004–1058; these read PPYS…EPCP, WVVG…QGPM, CPPE…RRCP, and PARW…AKCD. Disulfide bonds link C837–C879, C841–C884, and C852–C866. An N-linked (GlcNAc...) asparagine glycan is attached at N892. A PLAC domain is found at 1066-1104; it reads GPEECKDVNKVAYCPLVLKFQFCSRAYFRQMCCKTCQGR.

In terms of assembly, interacts with FBN1; this interaction promotes microfibrils assembly. It depends on Zn(2+) as a cofactor. In terms of processing, glycosylated. Can be O-fucosylated by POFUT2 on a serine or a threonine residue found within the consensus sequence C1-X(2)-(S/T)-C2-G of the TSP type-1 repeat domains where C1 and C2 are the first and second cysteine residue of the repeat, respectively. Fucosylated repeats can then be further glycosylated by the addition of a beta-1,3-glucose residue by the glucosyltransferase, B3GALTL. Fucosylation mediates the efficient secretion of ADAMTS family members. Can also be C-glycosylated with one or two mannose molecules on tryptophan residues within the consensus sequence W-X-X-W of the TPRs, and N-glycosylated. These other glycosylations can also facilitate secretion. In terms of tissue distribution, widely expressed in adult tissues.

It localises to the secreted. Its subcellular location is the extracellular space. The protein resides in the extracellular matrix. Functionally, metalloprotease that participate in microfibrils assembly. Microfibrils are extracellular matrix components occurring independently or along with elastin in the formation of elastic tissues. The polypeptide is A disintegrin and metalloproteinase with thrombospondin motifs 10 (Adamts10) (Mus musculus (Mouse)).